Here is a 43-residue protein sequence, read N- to C-terminus: MKQSKKKPSQKQHERLDRFWQQMMNTNMQTLRRGKGGAYKRRK.

This is an uncharacterized protein from Bacillus subtilis (strain 168).